The sequence spans 1328 residues: Peroxidasin homolog pxn-2 (1328 aa).

The first 16 residues, 1 to 16 (MLLEFLLLIGISLSTA), serve as a signal peptide directing secretion. Residues 17 to 45 (CPSECRCAGLDVHCEGKNLTAIPGHIPIA) form the LRRNT domain. Asn-34 carries an N-linked (GlcNAc...) asparagine glycan. LRR repeat units lie at residues 42 to 66 (IPIA…NFQA), 67 to 90 (LPNL…LLDS), 92 to 114 (PGLK…STAP), 116 to 137 (ALVS…LVSH), 138 to 161 (SPYM…FFNS), and 164 to 191 (VPTL…QFAD). An N-linked (GlcNAc...) asparagine glycan is attached at Asn-77. The N-linked (GlcNAc...) asparagine glycan is linked to Asn-220. Positions 305–332 (KKMQASSSTEPPITTTTMEPMTTSTMDS) are disordered. Low complexity predominate over residues 310-332 (SSSTEPPITTTTMEPMTTSTMDS). 2 consecutive Ig-like C2-type domains span residues 346–438 (PEID…FSVS) and 445–532 (PVII…ANLL). Cysteines 373 and 422 form a disulfide. Asn-403 and Asn-455 each carry an N-linked (GlcNAc...) asparagine glycan. Cys-466 and Cys-516 are joined by a disulfide. A glycan (N-linked (GlcNAc...) asparagine) is linked at Asn-630. A disulfide bridge links Cys-660 with Cys-676. Asp-754 is a binding site for heme b. Catalysis depends on His-755, which acts as the Proton acceptor. Residue Asp-756 coordinates Ca(2+). 2 disulfide bridges follow: Cys-775-Cys-785 and Cys-779-Cys-807. A glycan (N-linked (GlcNAc...) asparagine) is linked at Asn-776. 4 residues coordinate Ca(2+): Thr-839, Tyr-841, Asp-843, and Ser-845. Asn-894 is a glycosylation site (N-linked (GlcNAc...) asparagine). Heme b-binding residues include Glu-913 and His-1008. The LRR 7 repeat unit spans residues 1085–1109 (ALDLAALNIQRGRDHGLPSWTEYRK). Intrachain disulfides connect Cys-1111-Cys-1168 and Cys-1209-Cys-1236. N-linked (GlcNAc...) asparagine glycosylation is found at Asn-1112 and Asn-1128. The stretch at 1204–1225 (LSKIICTNGDDIDRIQRDIFVY) is one LRR 8 repeat. An N-linked (GlcNAc...) asparagine glycan is attached at Asn-1228. A disordered region spans residues 1266–1297 (IGGDEKAKRRKRRHHHSKKSCHDKGKRRKSGD). Positions 1273-1295 (KRRKRRHHHSKKSCHDKGKRRKS) are enriched in basic residues. N-linked (GlcNAc...) asparagine glycosylation is present at Asn-1300.

This sequence belongs to the peroxidase family. XPO subfamily. It depends on Ca(2+) as a cofactor. The cofactor is heme b. In terms of tissue distribution, expressed in vulval muscles and in some neurons including PVQ. Expressed in the hypodermis and in coelomocytes.

The protein resides in the secreted. It localises to the extracellular space. It is found in the extracellular matrix. Its subcellular location is the basement membrane. The enzyme catalyses L-lysyl-[collagen] + L-methionyl-[collagen] + H2O2 = [collagen]-L-lysyl-N-S-L-methionyl-[collagen] + 2 H2O + H(+). It carries out the reaction bromide + H2O2 = hypobromite + H2O. It catalyses the reaction L-lysyl-[collagen] + L-methionyl-[collagen] + hypobromite = [collagen]-L-lysyl-N-S-L-methionyl-[collagen] + bromide + H2O + H(+). The catalysed reaction is L-tyrosyl-[protein] + bromide + H2O2 + H(+) = 3-bromo-L-tyrosyl-[protein] + 2 H2O. The enzyme catalyses hypobromite + L-tyrosyl-[protein] + H(+) = 3-bromo-L-tyrosyl-[protein] + H2O. Its function is as follows. Catalyzes the two-electron oxidation of bromide by hydrogen peroxide and generates hypobromite as a reactive intermediate which mediates the formation of sulfilimine cross-links between methionine and hydroxylysine residues within an uncross-linked collagen IV/COL4A1 NC1 hexamer. Required for embryonic morphogenesis playing a role in epidermal elongation at the twofold stage of embryonic development. Required post-embryonically for basement membrane integrity and muscle-epidermal attachments, and specifically in the function of basement membrane components such as the type IV collagens. May have a role in inhibiting axon regeneration. May functionally antagonize the peroxidasin pxn-1. In Caenorhabditis elegans, this protein is Peroxidasin homolog pxn-2.